A 415-amino-acid polypeptide reads, in one-letter code: Transposase for insertion sequence element IS1081 (415 aa).

It belongs to the transposase mutator family.

In terms of biological role, required for the transposition of the insertion element. The chain is Transposase for insertion sequence element IS1081 from Mycobacterium bovis (strain ATCC BAA-935 / AF2122/97).